We begin with the raw amino-acid sequence, 344 residues long: Adenosine kinase 1 (344 aa).

Asp-299 is an active-site residue.

This sequence belongs to the carbohydrate kinase PfkB family. Interacts with the begomovirus AL2 protein and the curtovirus L2 protein. Mg(2+) serves as cofactor. As to expression, widely expressed.

It catalyses the reaction adenosine + ATP = AMP + ADP + H(+). Its pathway is purine metabolism; AMP biosynthesis via salvage pathway; AMP from adenosine: step 1/1. Its activity is regulated as follows. Inactivated by the begomovirus AL2 protein or the curtovirus L2 protein. Its function is as follows. ATP dependent phosphorylation of adenosine and other related nucleoside analogs to monophosphate derivatives. Essential to sustain methyl recycling. This Arabidopsis thaliana (Mouse-ear cress) protein is Adenosine kinase 1.